We begin with the raw amino-acid sequence, 343 residues long: L-threonine 3-dehydrogenase (343 aa).

C40 serves as a coordination point for Zn(2+). Residues T42 and H45 each act as charge relay system in the active site. Zn(2+)-binding residues include H65, E66, C95, C98, C101, and C109. Residues I177, D197, R202, 264 to 266 (LGI), and 288 to 289 (IY) contribute to the NAD(+) site.

Belongs to the zinc-containing alcohol dehydrogenase family. As to quaternary structure, homotetramer. Zn(2+) is required as a cofactor.

The protein localises to the cytoplasm. It catalyses the reaction L-threonine + NAD(+) = (2S)-2-amino-3-oxobutanoate + NADH + H(+). It participates in amino-acid degradation; L-threonine degradation via oxydo-reductase pathway; glycine from L-threonine: step 1/2. Its function is as follows. Catalyzes the NAD(+)-dependent oxidation of L-threonine to 2-amino-3-ketobutyrate. The chain is L-threonine 3-dehydrogenase from Aliivibrio salmonicida (strain LFI1238) (Vibrio salmonicida (strain LFI1238)).